A 468-amino-acid chain; its full sequence is UDP-N-acetylmuramate--L-alanine ligase (468 aa).

ATP is bound at residue 122–128 (GSHGKTT).

Belongs to the MurCDEF family.

The protein resides in the cytoplasm. The catalysed reaction is UDP-N-acetyl-alpha-D-muramate + L-alanine + ATP = UDP-N-acetyl-alpha-D-muramoyl-L-alanine + ADP + phosphate + H(+). The protein operates within cell wall biogenesis; peptidoglycan biosynthesis. Functionally, cell wall formation. The protein is UDP-N-acetylmuramate--L-alanine ligase of Synechococcus sp. (strain CC9902).